The following is a 118-amino-acid chain: MTIWNVAALTGLLSVGLGAYGSHGLQKRVQDPHLLKSWSTACTYLMFHSLATMAVSLHPVYGKSRWTGPLLITGSCLFSGTIYGLCLLPKGHSLRRILGPLTPIGGLVMLTGWATMLV.

Positions 1 to 18 (MTIWNVAALTGLLSVGLG) are cleaved as a signal peptide. The Lumenal portion of the chain corresponds to 19-40 (AYGSHGLQKRVQDPHLLKSWST). The chain crosses the membrane as a helical span at residues 41-61 (ACTYLMFHSLATMAVSLHPVY). Over 62–67 (GKSRWT) the chain is Cytoplasmic. A helical membrane pass occupies residues 68–88 (GPLLITGSCLFSGTIYGLCLL). Over 89 to 96 (PKGHSLRR) the chain is Lumenal. A helical membrane pass occupies residues 97 to 117 (ILGPLTPIGGLVMLTGWATML). Position 118 (Val118) is a topological domain, cytoplasmic.

This sequence belongs to the UPF0382 family.

It localises to the endoplasmic reticulum membrane. The polypeptide is UPF0382 membrane protein C1782.12c (Schizosaccharomyces pombe (strain 972 / ATCC 24843) (Fission yeast)).